We begin with the raw amino-acid sequence, 155 residues long: 6,7-dimethyl-8-ribityllumazine synthase (155 aa).

Residues Trp-23, Ala-57–Glu-59, and Cys-81–Ile-83 contribute to the 5-amino-6-(D-ribitylamino)uracil site. Asp-86–Thr-87 lines the (2S)-2-hydroxy-3-oxobutyl phosphate pocket. The active-site Proton donor is His-89. Asn-114 provides a ligand contact to 5-amino-6-(D-ribitylamino)uracil. Arg-128 is a binding site for (2S)-2-hydroxy-3-oxobutyl phosphate.

Belongs to the DMRL synthase family. In terms of assembly, forms an icosahedral capsid composed of 60 subunits, arranged as a dodecamer of pentamers.

It catalyses the reaction (2S)-2-hydroxy-3-oxobutyl phosphate + 5-amino-6-(D-ribitylamino)uracil = 6,7-dimethyl-8-(1-D-ribityl)lumazine + phosphate + 2 H2O + H(+). It participates in cofactor biosynthesis; riboflavin biosynthesis; riboflavin from 2-hydroxy-3-oxobutyl phosphate and 5-amino-6-(D-ribitylamino)uracil: step 1/2. Catalyzes the formation of 6,7-dimethyl-8-ribityllumazine by condensation of 5-amino-6-(D-ribitylamino)uracil with 3,4-dihydroxy-2-butanone 4-phosphate. This is the penultimate step in the biosynthesis of riboflavin. The chain is 6,7-dimethyl-8-ribityllumazine synthase from Stenotrophomonas maltophilia (strain K279a).